The sequence spans 442 residues: Histidine--tRNA ligase (442 aa).

Belongs to the class-II aminoacyl-tRNA synthetase family. Homodimer.

It is found in the cytoplasm. It catalyses the reaction tRNA(His) + L-histidine + ATP = L-histidyl-tRNA(His) + AMP + diphosphate + H(+). The polypeptide is Histidine--tRNA ligase (Psychrobacter arcticus (strain DSM 17307 / VKM B-2377 / 273-4)).